The primary structure comprises 377 residues: tRNA-specific 2-thiouridylase MnmA (377 aa).

ATP contacts are provided by residues 12 to 19 (GMSGGVDS) and Met-38. The segment at 98–100 (NPD) is interaction with target base in tRNA. Catalysis depends on Cys-103, which acts as the Nucleophile. Cys-103 and Cys-200 form a disulfide bridge. An ATP-binding site is contributed by Gly-127. The segment at 150-152 (KDQ) is interaction with tRNA. Cys-200 acts as the Cysteine persulfide intermediate in catalysis. The interaction with tRNA stretch occupies residues 314-315 (RY).

Belongs to the MnmA/TRMU family.

The protein resides in the cytoplasm. The catalysed reaction is S-sulfanyl-L-cysteinyl-[protein] + uridine(34) in tRNA + AH2 + ATP = 2-thiouridine(34) in tRNA + L-cysteinyl-[protein] + A + AMP + diphosphate + H(+). In terms of biological role, catalyzes the 2-thiolation of uridine at the wobble position (U34) of tRNA, leading to the formation of s(2)U34. In Limosilactobacillus fermentum (strain NBRC 3956 / LMG 18251) (Lactobacillus fermentum), this protein is tRNA-specific 2-thiouridylase MnmA.